The chain runs to 130 residues: Small ribosomal subunit protein uS8 (130 aa).

It belongs to the universal ribosomal protein uS8 family. Part of the 30S ribosomal subunit. Contacts proteins S5 and S12.

Functionally, one of the primary rRNA binding proteins, it binds directly to 16S rRNA central domain where it helps coordinate assembly of the platform of the 30S subunit. The sequence is that of Small ribosomal subunit protein uS8 from Buchnera aphidicola subsp. Acyrthosiphon kondoi (Acyrthosiphon kondoi symbiotic bacterium).